We begin with the raw amino-acid sequence, 504 residues long: Anaerobic nitric oxide reductase transcription regulator NorR (504 aa).

4-aspartylphosphate is present on Asp57. The region spanning 187–416 (MIGLSPGMTQ…LEHAIHRAVV (230 aa)) is the Sigma-54 factor interaction domain. ATP-binding positions include 215-222 (GETGTGKE) and 278-287 (ADNGTLFLDE). Positions 479–498 (WAACARMLETDVANLHRLAK) form a DNA-binding region, H-T-H motif.

It participates in nitrogen metabolism; nitric oxide reduction. Functionally, required for the expression of anaerobic nitric oxide (NO) reductase, acts as a transcriptional activator for at least the norVW operon. Activation also requires sigma-54. This is Anaerobic nitric oxide reductase transcription regulator NorR from Shigella boydii serotype 4 (strain Sb227).